The following is a 524-amino-acid chain: GMP synthase [glutamine-hydrolyzing] (524 aa).

Positions lysine 8–arginine 206 constitute a Glutamine amidotransferase type-1 domain. The active-site Nucleophile is cysteine 85. Catalysis depends on residues histidine 180 and glutamate 182. A GMPS ATP-PPase domain is found at tryptophan 207 to arginine 399. Residue serine 234–serine 240 coordinates ATP.

As to quaternary structure, homodimer.

It catalyses the reaction XMP + L-glutamine + ATP + H2O = GMP + L-glutamate + AMP + diphosphate + 2 H(+). It functions in the pathway purine metabolism; GMP biosynthesis; GMP from XMP (L-Gln route): step 1/1. In terms of biological role, catalyzes the synthesis of GMP from XMP. The sequence is that of GMP synthase [glutamine-hydrolyzing] from Methylococcus capsulatus (strain ATCC 33009 / NCIMB 11132 / Bath).